The following is a 424-amino-acid chain: DUF21 domain-containing protein At4g33700 (424 aa).

The Extracellular portion of the chain corresponds to M1–N11. The 184-residue stretch at C8–E191 folds into the CNNM transmembrane domain. Residues F12–L32 traverse the membrane as a helical segment. Residues T33 to H70 lie on the Cytoplasmic side of the membrane. Residues L71–L91 traverse the membrane as a helical segment. Residues D92 to L94 lie on the Extracellular side of the membrane. Residues V95 to I115 traverse the membrane as a helical segment. Over P116 to R136 the chain is Cytoplasmic. A helical transmembrane segment spans residues V137 to L157. The Extracellular portion of the chain corresponds to G158 to S424. The CBS 1 domain maps to M210 to V271. Residues N273 and N319 are each glycosylated (N-linked (GlcNAc...) asparagine). CBS domains follow at residues T275–S331 and P355–E416. Disordered regions lie at residues S321–R340 and P355–N374. At S331 the chain carries Phosphoserine.

The protein resides in the membrane. The chain is DUF21 domain-containing protein At4g33700 (CBSDUF6) from Arabidopsis thaliana (Mouse-ear cress).